A 101-amino-acid chain; its full sequence is A-type ATP synthase subunit F (101 aa).

Belongs to the V-ATPase F subunit family. As to quaternary structure, has multiple subunits, A(3), B(3), C, D, E, F, G, I and K(x); there may be a few other subunits as well.

Its subcellular location is the cell membrane. In terms of biological role, component of the A-type ATP synthase that produces ATP from ADP in the presence of a proton gradient across the membrane. The protein is A-type ATP synthase subunit F of Methanosarcina mazei (strain ATCC BAA-159 / DSM 3647 / Goe1 / Go1 / JCM 11833 / OCM 88) (Methanosarcina frisia).